A 95-amino-acid chain; its full sequence is CRISPR-associated endoribonuclease Cas2 3 (95 aa).

Asp-7 provides a ligand contact to Mg(2+).

The protein belongs to the CRISPR-associated endoribonuclease Cas2 protein family. Homodimer, forms a heterotetramer with a Cas1 homodimer. Mg(2+) is required as a cofactor.

Functionally, CRISPR (clustered regularly interspaced short palindromic repeat), is an adaptive immune system that provides protection against mobile genetic elements (viruses, transposable elements and conjugative plasmids). CRISPR clusters contain sequences complementary to antecedent mobile elements and target invading nucleic acids. CRISPR clusters are transcribed and processed into CRISPR RNA (crRNA). Functions as a ssRNA-specific endoribonuclease. Involved in the integration of spacer DNA into the CRISPR cassette. The protein is CRISPR-associated endoribonuclease Cas2 3 of Rhodospirillum rubrum (strain ATCC 11170 / ATH 1.1.1 / DSM 467 / LMG 4362 / NCIMB 8255 / S1).